Here is a 317-residue protein sequence, read N- to C-terminus: Carbamate kinase (317 aa).

This sequence belongs to the carbamate kinase family. In terms of assembly, homodimer.

It catalyses the reaction hydrogencarbonate + NH4(+) + ATP = carbamoyl phosphate + ADP + H2O + H(+). It functions in the pathway metabolic intermediate metabolism; carbamoyl phosphate degradation; CO(2) and NH(3) from carbamoyl phosphate: step 1/1. This is Carbamate kinase (CBK) from Giardia intestinalis (Giardia lamblia).